The primary structure comprises 127 residues: Large ribosomal subunit protein bL12 (127 aa).

It belongs to the bacterial ribosomal protein bL12 family. As to quaternary structure, homodimer. Part of the ribosomal stalk of the 50S ribosomal subunit. Forms a multimeric L10(L12)X complex, where L10 forms an elongated spine to which 2 to 4 L12 dimers bind in a sequential fashion. Binds GTP-bound translation factors.

Functionally, forms part of the ribosomal stalk which helps the ribosome interact with GTP-bound translation factors. Is thus essential for accurate translation. The chain is Large ribosomal subunit protein bL12 from Sinorhizobium fredii (strain NBRC 101917 / NGR234).